A 1384-amino-acid polypeptide reads, in one-letter code: DNA-directed RNA polymerase subunit beta' (1384 aa).

The Zn(2+) site is built by Cys81, Cys83, Cys96, and Cys99. Positions 472, 474, and 476 each coordinate Mg(2+).

This sequence belongs to the RNA polymerase beta' chain family. The RNAP catalytic core consists of 2 alpha, 1 beta, 1 beta' and 1 omega subunit. When a sigma factor is associated with the core the holoenzyme is formed, which can initiate transcription. Requires Mg(2+) as cofactor. Zn(2+) is required as a cofactor.

The catalysed reaction is RNA(n) + a ribonucleoside 5'-triphosphate = RNA(n+1) + diphosphate. In terms of biological role, DNA-dependent RNA polymerase catalyzes the transcription of DNA into RNA using the four ribonucleoside triphosphates as substrates. This is DNA-directed RNA polymerase subunit beta' from Opitutus terrae (strain DSM 11246 / JCM 15787 / PB90-1).